Here is a 404-residue protein sequence, read N- to C-terminus: Cysteine desulfurase IscS (404 aa).

Pyridoxal 5'-phosphate contacts are provided by residues 75 to 76 (AT), Asn155, Gln183, and 203 to 205 (SGH). Lys206 is modified (N6-(pyridoxal phosphate)lysine). Thr243 provides a ligand contact to pyridoxal 5'-phosphate. The active-site Cysteine persulfide intermediate is the Cys328. Cys328 lines the [2Fe-2S] cluster pocket.

The protein belongs to the class-V pyridoxal-phosphate-dependent aminotransferase family. NifS/IscS subfamily. As to quaternary structure, homodimer. Forms a heterotetramer with IscU, interacts with other sulfur acceptors. The cofactor is pyridoxal 5'-phosphate.

It localises to the cytoplasm. The enzyme catalyses (sulfur carrier)-H + L-cysteine = (sulfur carrier)-SH + L-alanine. It functions in the pathway cofactor biosynthesis; iron-sulfur cluster biosynthesis. Functionally, master enzyme that delivers sulfur to a number of partners involved in Fe-S cluster assembly, tRNA modification or cofactor biosynthesis. Catalyzes the removal of elemental sulfur atoms from cysteine to produce alanine. Functions as a sulfur delivery protein for Fe-S cluster synthesis onto IscU, an Fe-S scaffold assembly protein, as well as other S acceptor proteins. This Shewanella baltica (strain OS155 / ATCC BAA-1091) protein is Cysteine desulfurase IscS.